A 494-amino-acid polypeptide reads, in one-letter code: Probable cytosol aminopeptidase (494 aa).

The Mn(2+) site is built by lysine 260 and aspartate 265. The active site involves lysine 272. Mn(2+) contacts are provided by aspartate 283, aspartate 342, and glutamate 344. The active site involves arginine 346.

It belongs to the peptidase M17 family. Requires Mn(2+) as cofactor.

Its subcellular location is the cytoplasm. It carries out the reaction Release of an N-terminal amino acid, Xaa-|-Yaa-, in which Xaa is preferably Leu, but may be other amino acids including Pro although not Arg or Lys, and Yaa may be Pro. Amino acid amides and methyl esters are also readily hydrolyzed, but rates on arylamides are exceedingly low.. The enzyme catalyses Release of an N-terminal amino acid, preferentially leucine, but not glutamic or aspartic acids.. Presumably involved in the processing and regular turnover of intracellular proteins. Catalyzes the removal of unsubstituted N-terminal amino acids from various peptides. This chain is Probable cytosol aminopeptidase, found in Bacillus thuringiensis subsp. konkukian (strain 97-27).